The following is a 338-amino-acid chain: Pseudouridylate synthase TRUB1 (338 aa).

Ala2 is modified (N-acetylalanine). Asp109 (nucleophile) is an active-site residue.

This sequence belongs to the pseudouridine synthase TruB family.

It localises to the nucleus. The protein resides in the cytoplasm. Its subcellular location is the cytosol. It carries out the reaction a uridine in mRNA = a pseudouridine in mRNA. The enzyme catalyses a uridine in tRNA = a pseudouridine in tRNA. The catalysed reaction is uridine(55) in tRNA = pseudouridine(55) in tRNA. Pseudouridine synthase that catalyzes pseudouridylation of mRNAs and tRNAs. Mediates pseudouridylation of mRNAs with the consensus sequence 5'-GUUCNANNC-3', harboring a stem-loop structure. Constitutes the major pseudouridine synthase acting on mRNAs. Also catalyzes pseudouridylation of some tRNAs, including synthesis of pseudouridine(55) from uracil-55, in the psi GC loop of a subset of tRNAs. Promotes the processing of pri-let-7 microRNAs (pri-miRNAs) independently of its RNA pseudouridylate synthase activity. Acts by binding to the stem-loop structure on pri-let-7, preventing LIN28-binding (LIN28A and/or LIN28B), thereby enhancing the interaction between pri-let-7 and the microprocessor DGCR8, which mediates miRNA maturation. The sequence is that of Pseudouridylate synthase TRUB1 from Mus musculus (Mouse).